Here is a 79-residue protein sequence, read N- to C-terminus: Cytochrome c oxidase assembly factor 6 homolog (79 aa).

A CHCH domain is found at 9 to 52; it reads RQACWGARDEYWKCLDENTEDASKCKKLRSSFESSCPQQWIKYF. The Cx9C motif signature appears at 12-22; that stretch reads CWGARDEYWKC. 2 disulfide bridges follow: cysteine 12/cysteine 44 and cysteine 22/cysteine 33. The Cx10C motif signature appears at 33-44; that stretch reads CKKLRSSFESSC.

Belongs to the cytochrome c oxidase subunit 6B family. As to quaternary structure, found in a complex with TMEM177, COX20, MT-CO2/COX2, COX18, SCO1 and SCO2. Interacts with COA1, MT-CO2/COX2, SCO1, SCO2 and COX20. Interacts with COX20 in a MT-CO2/COX2- and COX18-dependent manner. Interacts with COX16.

The protein localises to the mitochondrion intermembrane space. In terms of biological role, involved in the maturation of the mitochondrial respiratory chain complex IV subunit MT-CO2/COX2. Thereby, may regulate early steps of complex IV assembly. Mitochondrial respiratory chain complex IV or cytochrome c oxidase is the component of the respiratory chain that catalyzes the transfer of electrons from intermembrane space cytochrome c to molecular oxygen in the matrix and as a consequence contributes to the proton gradient involved in mitochondrial ATP synthesis. May also be required for efficient formation of respiratory supercomplexes comprised of complexes III and IV. In Bos taurus (Bovine), this protein is Cytochrome c oxidase assembly factor 6 homolog (COA6).